The following is a 213-amino-acid chain: Pyrrolidone-carboxylate peptidase (213 aa).

Catalysis depends on residues glutamate 78, cysteine 141, and histidine 165.

It belongs to the peptidase C15 family. Homotetramer.

The protein resides in the cytoplasm. It carries out the reaction Release of an N-terminal pyroglutamyl group from a polypeptide, the second amino acid generally not being Pro.. Its function is as follows. Removes 5-oxoproline from various penultimate amino acid residues except L-proline. This chain is Pyrrolidone-carboxylate peptidase, found in Finegoldia magna (strain ATCC 29328 / DSM 20472 / WAL 2508) (Peptostreptococcus magnus).